The following is an 862-amino-acid chain: uncharacterized protein (862 aa).

Disordered stretches follow at residues 45–91, 633–824, and 837–862; these read HPPV…PDEV, RAEQ…GDDD, and GGSGFLTSTAGRNRKSNKQSKTLLLS. 2 stretches are compositionally biased toward acidic residues: residues 57–69 and 78–91; these read MDVDAESEDEKDE and PEVESEADEDPDEV. 3 stretches are compositionally biased toward basic and acidic residues: residues 633 to 650, 657 to 686, and 694 to 703; these read RAEQKASKESAKGEDAAK, REAEAGTETPKKKQKEEKSEKPKKTGKAEK, and TKKEKTEKKT. Residues 751 to 760 show a composition bias toward basic residues; the sequence is EKKKRTAAKK. Basic and acidic residues predominate over residues 761–779; it reads KTVDRPSGHRPSSKKEYRS.

This is an uncharacterized protein from Ictaluridae (bullhead catfishes).